Here is a 355-residue protein sequence, read N- to C-terminus: Protein RecA (355 aa).

67 to 74 (GPESSGKT) lines the ATP pocket.

It belongs to the RecA family.

It localises to the cytoplasm. In terms of biological role, can catalyze the hydrolysis of ATP in the presence of single-stranded DNA, the ATP-dependent uptake of single-stranded DNA by duplex DNA, and the ATP-dependent hybridization of homologous single-stranded DNAs. It interacts with LexA causing its activation and leading to its autocatalytic cleavage. This chain is Protein RecA, found in Shewanella piezotolerans (strain WP3 / JCM 13877).